We begin with the raw amino-acid sequence, 153 residues long: NAD(P)H-quinone oxidoreductase subunit N (153 aa).

The protein belongs to the complex I NdhN subunit family. As to quaternary structure, NDH-1 can be composed of about 15 different subunits; different subcomplexes with different compositions have been identified which probably have different functions.

Its subcellular location is the cellular thylakoid membrane. The catalysed reaction is a plastoquinone + NADH + (n+1) H(+)(in) = a plastoquinol + NAD(+) + n H(+)(out). It catalyses the reaction a plastoquinone + NADPH + (n+1) H(+)(in) = a plastoquinol + NADP(+) + n H(+)(out). Its function is as follows. NDH-1 shuttles electrons from an unknown electron donor, via FMN and iron-sulfur (Fe-S) centers, to quinones in the respiratory and/or the photosynthetic chain. The immediate electron acceptor for the enzyme in this species is believed to be plastoquinone. Couples the redox reaction to proton translocation, and thus conserves the redox energy in a proton gradient. Cyanobacterial NDH-1 also plays a role in inorganic carbon-concentration. The protein is NAD(P)H-quinone oxidoreductase subunit N of Synechococcus sp. (strain CC9311).